The primary structure comprises 408 residues: MNYLYNISESLKKIFNYFSSITRDCEKKRVLIIGCGFGGSQVAKLLDSNFEVTVVERKQTFFNSIASIRAIVEPELAKKIYIPYDKLLKNGKFIYGTVIEISPTLVKLEDGKELTFDYLVIATGSNSLAPFKAPLEKISGTEIFNYYKDISEQIKQAKSILIVGGGSVGCEVVGEIINKYPIKNKELAKKITIVHSGNKLVSSKTNNKFNNLINESMKKRNVSVILNDRIEIPDDIKQCFINQTSPNFQVSLKTYKTKNGLSIESDFVIWTIGIKLNSESYKTNFSNEINEIGQIKVNQSCQVQGYDNIFAIGDITDFDELKTTYNALSHGNIVAKVIKDLSNGKNKNQLAKHKLLPPIISLSLGPKDGLTQINSNLNFGSFISRILKSNNLLINRFQTHFNNPEPLK.

Residues 34–38 (GCGFG), arginine 69, and aspartate 314 each bind FAD.

Belongs to the FAD-dependent oxidoreductase family. FAD is required as a cofactor.

In terms of biological role, putative FAD-dependent oxidoreductase. The protein is Apoptosis-inducing factor homolog A (aifA) of Dictyostelium discoideum (Social amoeba).